Consider the following 1050-residue polypeptide: Self-sufficient cytochrome P450 monooxygenase CYP505E5 (1050 aa).

C405 contributes to the heme binding site. The tract at residues 461 to 495 is disordered; it reads TATGLSRRSMLVARDGSSEESSNHPAEARGDHAPA. Residues 500 to 641 form the Flavodoxin-like domain; sequence VSFFYGSNSG…DLEAWEETSL (142 aa). FMN-binding positions include 506–510 and 585–617; these read SNSGT and VFGC…TRLA. Residues 679-907 enclose the FAD-binding FR-type domain; the sequence is KGLIEAKVTA…RPAKETFHLP (229 aa).

It in the N-terminal section; belongs to the cytochrome P450 family. The cofactor is FAD. FMN is required as a cofactor. It depends on heme as a cofactor.

The enzyme catalyses 2 oxidized [cytochrome P450] + NADPH = 2 reduced [cytochrome P450] + NADP(+) + H(+). The catalysed reaction is an organic molecule + reduced [NADPH--hemoprotein reductase] + O2 = an alcohol + oxidized [NADPH--hemoprotein reductase] + H2O + H(+). It catalyses the reaction dodecanoate + reduced [NADPH--hemoprotein reductase] + O2 = 5-hydroxydodecanoate + oxidized [NADPH--hemoprotein reductase] + H2O + H(+). It carries out the reaction tetradecanoate + reduced [NADPH--hemoprotein reductase] + O2 = 7-hydroxytetradecanoate + oxidized [NADPH--hemoprotein reductase] + H2O + H(+). The enzyme catalyses dodecan-1-ol + reduced [NADPH--hemoprotein reductase] + O2 = 1,5-dodecanediol + oxidized [NADPH--hemoprotein reductase] + H2O + H(+). The catalysed reaction is dodecan-1-ol + reduced [NADPH--hemoprotein reductase] + O2 = 1,4-dodecanediol + oxidized [NADPH--hemoprotein reductase] + H2O + H(+). It catalyses the reaction dodecan-1-ol + reduced [NADPH--hemoprotein reductase] + O2 = 1,6-dodecanediol + oxidized [NADPH--hemoprotein reductase] + H2O + H(+). Its function is as follows. Self-sufficient cytochrome P450 monooxygenase that catalyzes the regioselective in-chain hydroxylation of alkanes, fatty alcohols, and fatty acids at the omega-7 position. Performs hydroxylation of C10-C16 n-alkanes and C12 and C14 fatty alcohols; and thereby enables the one step biocatalytic synthesis of rare alcohols such as 5-dodecanol and 7-tetradecanol. Converts 1-dodecanol into 1,5-dodecanediol as major product with very little sub-terminally hydroxylated products with the 1,4-dodecanediol and 1,6-dodecanediol more abundant. Converts dodecanoic acid to 5-hydroxydodecanoic acid which can be further converted into delta-dodecalactone by lactonization of the 5-hydroxy acid at low pH. Also gives sub-terminal hydroxylation of dodecanoic acid with 9-hydroxydodecanoic acid being the second most abundant product. The chain is Self-sufficient cytochrome P450 monooxygenase CYP505E5 from Aspergillus kawachii (strain NBRC 4308) (White koji mold).